Here is an 822-residue protein sequence, read N- to C-terminus: AP-1 complex subunit gamma-1 (822 aa).

Residues 593-604 (NGPSEIVQTNGE) show a composition bias toward polar residues. Residues 593–627 (NGPSEIVQTNGETEPAPLETKPPPSGPQPTSQAND) form a disordered region. The GAE domain occupies 702 to 817 (PGIPSITAYS…QDLAEVNNFP (116 aa)).

It belongs to the adaptor complexes large subunit family. Adaptor protein complex 1 (AP-1) is a heterotetramer composed of two large adaptins (gamma-type subunit AP1G1 and beta-type subunit AP1B1), a medium adaptin (mu-type subunit AP1M1 or AP1M2) and a small adaptin (sigma-type subunit AP1S1 or AP1S2 or AP1S3). Interacts (via GAE domain) with RABEP1. Interacts with EPS15. Interacts with SYNRG/gamma-synergin. Interacts (via GAE domain) with AP1AR (via coiled-coil domain). Interacts with CLN3 (via dileucine motif); this interaction facilitates lysosomal targeting. Interacts (via GAE domain) with AFTPH/aftiphilin; the interaction is required to recruit AFTPH/aftiphilin to the perinuclear region of the cell. As to expression, widely expressed.

The protein resides in the golgi apparatus. It is found in the cytoplasmic vesicle. Its subcellular location is the clathrin-coated vesicle membrane. The protein localises to the cytoplasm. It localises to the perinuclear region. The protein resides in the clathrin-coated vesicle. It is found in the membrane. Its subcellular location is the clathrin-coated pit. Subunit of clathrin-associated adaptor protein complex 1 that plays a role in protein sorting in the late-Golgi/trans-Golgi network (TGN) and/or endosomes. The AP complexes mediate both the recruitment of clathrin to membranes and the recognition of sorting signals within the cytosolic tails of transmembrane cargo molecules. In association with AFTPH/aftiphilin in the aftiphilin/p200/gamma-synergin complex, involved in the trafficking of transferrin from early to recycling endosomes, and the membrane trafficking of furin and the lysosomal enzyme cathepsin D between the trans-Golgi network (TGN) and endosomes. This Mus musculus (Mouse) protein is AP-1 complex subunit gamma-1 (Ap1g1).